Here is a 125-residue protein sequence, read N- to C-terminus: Putative RNA polymerase sigma-G factor (125 aa).

The protein belongs to the sigma-70 factor family.

Sigma factors are initiation factors that promote the attachment of RNA polymerase to specific initiation sites and are then released. In Bacillus thuringiensis subsp. kurstaki, this protein is Putative RNA polymerase sigma-G factor.